The chain runs to 336 residues: MKERIVNLETLDFETSQEASLRPNLWEDYIGQEKIKSNLQVSICAAKKRQESLDHMLFFGPPGLGKTSISHIIAKEMETNLKITAAPMIEKSGDLAAILTNLQAKDILFIDEIHRLSPAIEEVLYPAMEDFRLDIIIGSGPAAQTIKIDLPPFTLIGATTRAGMLSNPLRDRFGMSFRMQFYSPSELALIIKKAAAKLNQDIKEESADEIAKRSRGTPRIALRLLKRVRDFALVKNSSLMDLNITLHALNELGVNELGFDEADLAYLSLLANAQGRPVGLNTIAASMREDEGTIEDVIEPFLLANGYLERTAKGRIATPKTHALLKIPTLNPQTLF.

Residues 1-182 are large ATPase domain (RuvB-L); it reads MKERIVNLET…FGMSFRMQFY (182 aa). Residues L21, R22, G63, K66, T67, S68, 129-131, R172, Y182, and R219 each bind ATP; that span reads EDF. Residue T67 coordinates Mg(2+). The tract at residues 183–253 is small ATPAse domain (RuvB-S); the sequence is SPSELALIIK…ITLHALNELG (71 aa). The interval 256–336 is head domain (RuvB-H); sequence ELGFDEADLA…IPTLNPQTLF (81 aa). Residues R310 and R315 each contribute to the DNA site.

This sequence belongs to the RuvB family. Homohexamer. Forms an RuvA(8)-RuvB(12)-Holliday junction (HJ) complex. HJ DNA is sandwiched between 2 RuvA tetramers; dsDNA enters through RuvA and exits via RuvB. An RuvB hexamer assembles on each DNA strand where it exits the tetramer. Each RuvB hexamer is contacted by two RuvA subunits (via domain III) on 2 adjacent RuvB subunits; this complex drives branch migration. In the full resolvosome a probable DNA-RuvA(4)-RuvB(12)-RuvC(2) complex forms which resolves the HJ.

It localises to the cytoplasm. The enzyme catalyses ATP + H2O = ADP + phosphate + H(+). In terms of biological role, the RuvA-RuvB-RuvC complex processes Holliday junction (HJ) DNA during genetic recombination and DNA repair, while the RuvA-RuvB complex plays an important role in the rescue of blocked DNA replication forks via replication fork reversal (RFR). RuvA specifically binds to HJ cruciform DNA, conferring on it an open structure. The RuvB hexamer acts as an ATP-dependent pump, pulling dsDNA into and through the RuvAB complex. RuvB forms 2 homohexamers on either side of HJ DNA bound by 1 or 2 RuvA tetramers; 4 subunits per hexamer contact DNA at a time. Coordinated motions by a converter formed by DNA-disengaged RuvB subunits stimulates ATP hydrolysis and nucleotide exchange. Immobilization of the converter enables RuvB to convert the ATP-contained energy into a lever motion, pulling 2 nucleotides of DNA out of the RuvA tetramer per ATP hydrolyzed, thus driving DNA branch migration. The RuvB motors rotate together with the DNA substrate, which together with the progressing nucleotide cycle form the mechanistic basis for DNA recombination by continuous HJ branch migration. Branch migration allows RuvC to scan DNA until it finds its consensus sequence, where it cleaves and resolves cruciform DNA. This chain is Holliday junction branch migration complex subunit RuvB, found in Helicobacter pylori (strain Shi470).